The chain runs to 493 residues: Glutamate--tRNA ligase (493 aa).

The 'HIGH' region motif lies at 10–20 (PSPTGDPHVGT). Residues 251–255 (KLSKR) carry the 'KMSKS' region motif. Residue K254 coordinates ATP.

It belongs to the class-I aminoacyl-tRNA synthetase family. Glutamate--tRNA ligase type 1 subfamily. In terms of assembly, monomer.

It is found in the cytoplasm. The catalysed reaction is tRNA(Glu) + L-glutamate + ATP = L-glutamyl-tRNA(Glu) + AMP + diphosphate. In terms of biological role, catalyzes the attachment of glutamate to tRNA(Glu) in a two-step reaction: glutamate is first activated by ATP to form Glu-AMP and then transferred to the acceptor end of tRNA(Glu). The chain is Glutamate--tRNA ligase from Pseudomonas fluorescens (strain Pf0-1).